Reading from the N-terminus, the 152-residue chain is Male-specific protein scotti (152 aa).

This sequence belongs to the male-specific scotti family.

Post-meiotically transcribed gene that has a role in late spermiogenesis; required for actin cone progression during spermatid individualization. This is Male-specific protein scotti from Drosophila mojavensis (Fruit fly).